The chain runs to 65 residues: Large ribosomal subunit protein bL35 (65 aa).

The protein belongs to the bacterial ribosomal protein bL35 family.

In Yersinia enterocolitica serotype O:8 / biotype 1B (strain NCTC 13174 / 8081), this protein is Large ribosomal subunit protein bL35.